A 494-amino-acid polypeptide reads, in one-letter code: Glutamate--tRNA ligase (494 aa).

Positions 9–19 (PSPTGPLHIGS) match the 'HIGH' region motif. The 'KMSKS' region motif lies at 249–253 (KLSKR). Lysine 252 serves as a coordination point for ATP.

This sequence belongs to the class-I aminoacyl-tRNA synthetase family. Glutamate--tRNA ligase type 1 subfamily. In terms of assembly, monomer.

The protein localises to the cytoplasm. The enzyme catalyses tRNA(Glu) + L-glutamate + ATP = L-glutamyl-tRNA(Glu) + AMP + diphosphate. Catalyzes the attachment of glutamate to tRNA(Glu) in a two-step reaction: glutamate is first activated by ATP to form Glu-AMP and then transferred to the acceptor end of tRNA(Glu). The chain is Glutamate--tRNA ligase from Azobacteroides pseudotrichonymphae genomovar. CFP2.